We begin with the raw amino-acid sequence, 1549 residues long: Structural maintenance of chromosomes protein 4 (1549 aa).

Residues 1 to 78 (MPPKTSAAPP…LFSLQLPSRP (78 aa)) are disordered. Residues 26-36 (KPQKKTTKPVN) are compositionally biased toward basic residues. Residues 37–59 (RHKEGSKDPEEELQRAVNEKFDG) are compositionally biased toward basic and acidic residues. Residue 121–128 (GPNGSGKS) coordinates ATP. The stretch at 326–604 (MKLEQRRRQR…QNSSCSSSNK (279 aa)) forms a coiled coil. 2 stretches are compositionally biased toward basic and acidic residues: residues 396–407 (LSDLGTEETRRK) and 420–444 (AEAEKEKEVKKRSNLEAAPEKAERK). 2 disordered regions span residues 396–444 (LSDL…AERK) and 460–485 (KTANEEADKNLDEFEKRSEAPKEEQK). Residues 619–734 (KSFHGRLGDL…GDSTQEAQRM (116 aa)) form the SMC hinge domain. Coiled coils occupy residues 786–1058 (KAAE…KVNR) and 1144–1182 (EKINEISSRDAEEMQMKLKVCEQQVEALKAKVDISSIKA). A compositionally biased stretch (polar residues) spans 1440-1459 (IQTTRDVTSRPQSKATTSGD). The segment at 1440 to 1549 (IQTTRDVTSR…AIVDDDDDME (110 aa)) is disordered. Positions 1460-1474 (GTERPASRSASRPES) are enriched in basic and acidic residues. Over residues 1510–1523 (TPPSKRSNSASTPK) the composition is skewed to polar residues.

Belongs to the SMC family. SMC4 subfamily. Component of the condensin I complex, which contains the mix-1/SMC2 and smc-4/SMC4 heterodimer, and three non SMC subunits that probably regulate the complex: dpy-26, capg-1 and dpy-28. Within the complex, interacts with mix-1, dpy-26, capg-1 and dpy-28. Component of the condensin II complex, which contains the mix-1/SMC2 and smc-4/SMC4 heterodimer, and three non SMC subunits, kle-2, capg-2 and hcp-6 that probably regulate the complex. Within the complex, interacts with mix-1, kle-2, capg-2 and hcp-6. Interacts with smcl-1.

The protein localises to the nucleus. The protein resides in the chromosome. Functionally, central component of the condensin I complex, a complex required for conversion of interphase chromatin into mitotic-like condense chromosomes. The condensin I complex introduces positive supercoils into relaxed DNA in the presence of type I topoisomerases. Converts nicked DNA into positive knotted forms in the presence of type II topoisomerases. Also a central component of the condensin II complex, a complex that seems to play a role in prophase chromosome condensation. Both the condensin complex I and II play a role in meiotic and mitotic chromosome segregation. Plays a role in robust cytokinesis upon the presence of chromatin obstructions. The sequence is that of Structural maintenance of chromosomes protein 4 (smc-4) from Caenorhabditis elegans.